We begin with the raw amino-acid sequence, 1290 residues long: Period circadian protein homolog 1 (1290 aa).

Residues 1–134 (MSGPLEGADG…SSEQSARART (134 aa)) form a disordered region. The segment at 1-151 (MSGPLEGADG…LRELKLRLPP (151 aa)) is interaction with BTRC. Positions 25-38 (VPSPGPPQHRPCPG) are enriched in pro residues. 2 stretches are compositionally biased toward low complexity: residues 48–57 (NSNGSSGNES) and 64–115 (GASQ…ASSE). Over residues 116–132 (QDNPSTSGCSSEQSARA) the composition is skewed to polar residues. Residue threonine 121 is modified to Phosphothreonine; by CSNK1E. Residues serine 122 and serine 126 each carry the phosphoserine; by CSNK1E modification. The Nuclear export signal 1 signature appears at 138–147 (LMTALRELKL). PAS domains are found at residues 208–275 (ITSE…PSRL) and 348–414 (YEAP…KILQ). Residues 422 to 465 (HSPIRFCARNGEYVTMDTSWAGFVHPWSRKVAFVLGRHKVRTAP) form the PAC domain. A Nuclear export signal 2 motif is present at residues 489–498 (LSEQIHRLLL). 2 disordered regions span residues 508-544 (GLCGVGAVTSPGPLHSPGSSSDSNGGDAEGPGPPAPV) and 646-698 (TTKR…KEPV). 2 stretches are compositionally biased toward low complexity: residues 517 to 533 (SPGPLHSPGSSSDSNGG) and 652 to 662 (ASSSSYTTSSA). The required for phosphorylation by CSNK1E stretch occupies residues 596-815 (ELEAGSAPVQ…GLDSSSTAPS (220 aa)). Serine 661, serine 663, and serine 704 each carry phosphoserine. Disordered regions lie at residues 749 to 772 (GLAPGPAPSPAPSPTVAPDPAPDA), 805 to 874 (RGLD…PPAT), and 938 to 977 (ALQTPAEGPPTPASHSPSPSLPALAPSPPHRPDSPLFNSR). The segment covering 751–769 (APGPAPSPAPSPTVAPDPA) has biased composition (pro residues). The residue at position 815 (serine 815) is a Phosphoserine. A Nuclear localization signal motif is present at residues 827 to 843 (APPSRRHHCRSKAKRSR). A compositionally biased stretch (basic residues) spans 830-847 (SRRHHCRSKAKRSRHHQN). The span at 860–874 (SPVPPSTPWPTPPAT) shows a compositional bias: pro residues. Residues 950–961 (ASHSPSPSLPAL) show a composition bias toward low complexity. Serine 979 and serine 980 each carry phosphoserine. A Nuclear export signal 3 motif is present at residues 982–989 (LQLNLLQL). The disordered stretch occupies residues 996 to 1037 (EGAAVAGGPGSSAGPPPPSAEAAEPEARLAEVTESSNQDALS). An LXXLL motif is present at residues 1043–1047 (LELLL). The segment covering 1051-1062 (SRSGTGSAASGS) has biased composition (low complexity). 2 disordered regions span residues 1051 to 1098 (SRSG…SKYF) and 1207 to 1290 (SSTQ…NCTS). The span at 1063–1077 (LGSGLGSGSGSGSHE) shows a compositional bias: gly residues. The span at 1078–1095 (GGSTSASITRSSQSSHTS) shows a compositional bias: low complexity. The tract at residues 1149 to 1290 (SRDMTSVLKQ…ALPTAGNCTS (142 aa)) is CRY binding domain. Residues 1236–1248 (GEQGSSGGGSGEG) are compositionally biased toward gly residues.

In terms of assembly, homodimer. Component of the circadian core oscillator, which includes the CRY proteins, CLOCK or NPAS2, BMAL1 or BMAL2, CSNK1D and/or CSNK1E, TIMELESS, and the PER proteins. Interacts directly with TIMELESS, PER2, PER3, CRY1 and CRY2. Interacts with BMAL1 and CLOCK. Interacts with GPRASP1. Interacts (phosphorylated) with BTRC and FBXW11; the interactions trigger proteasomal degradation. Interacts with NONO, WDR5 and SFPQ. Interacts with USP2. Interacts with HNF4A. Phosphorylated on serine residues by CSNK1D, CSNK1E and probably also by CSNK1G2. Phosphorylation by CSNK1D or CSNK1E promotes nuclear location of PER proteins as well as ubiquitination and subsequent degradation. May be dephosphorylated by PP1. In terms of processing, ubiquitinated; requires phosphorylation by CSNK1E and interaction with BTRC and FBXW11. Deubiquitinated by USP2. As to expression, widely expressed. Expressed in hair follicles (at protein level). Found in heart, brain, placenta, lung, liver, skeletal muscle, pancreas, kidney, spleen, thymus, prostate, testis, ovary and small intestine. Highest level in skeletal muscle.

The protein localises to the nucleus. The protein resides in the cytoplasm. Functionally, transcriptional repressor which forms a core component of the circadian clock. The circadian clock, an internal time-keeping system, regulates various physiological processes through the generation of approximately 24 hour circadian rhythms in gene expression, which are translated into rhythms in metabolism and behavior. It is derived from the Latin roots 'circa' (about) and 'diem' (day) and acts as an important regulator of a wide array of physiological functions including metabolism, sleep, body temperature, blood pressure, endocrine, immune, cardiovascular, and renal function. Consists of two major components: the central clock, residing in the suprachiasmatic nucleus (SCN) of the brain, and the peripheral clocks that are present in nearly every tissue and organ system. Both the central and peripheral clocks can be reset by environmental cues, also known as Zeitgebers (German for 'timegivers'). The predominant Zeitgeber for the central clock is light, which is sensed by retina and signals directly to the SCN. The central clock entrains the peripheral clocks through neuronal and hormonal signals, body temperature and feeding-related cues, aligning all clocks with the external light/dark cycle. Circadian rhythms allow an organism to achieve temporal homeostasis with its environment at the molecular level by regulating gene expression to create a peak of protein expression once every 24 hours to control when a particular physiological process is most active with respect to the solar day. Transcription and translation of core clock components (CLOCK, NPAS2, BMAL1, BMAL2, PER1, PER2, PER3, CRY1 and CRY2) plays a critical role in rhythm generation, whereas delays imposed by post-translational modifications (PTMs) are important for determining the period (tau) of the rhythms (tau refers to the period of a rhythm and is the length, in time, of one complete cycle). A diurnal rhythm is synchronized with the day/night cycle, while the ultradian and infradian rhythms have a period shorter and longer than 24 hours, respectively. Disruptions in the circadian rhythms contribute to the pathology of cardiovascular diseases, cancer, metabolic syndromes and aging. A transcription/translation feedback loop (TTFL) forms the core of the molecular circadian clock mechanism. Transcription factors, CLOCK or NPAS2 and BMAL1 or BMAL2, form the positive limb of the feedback loop, act in the form of a heterodimer and activate the transcription of core clock genes and clock-controlled genes (involved in key metabolic processes), harboring E-box elements (5'-CACGTG-3') within their promoters. The core clock genes: PER1/2/3 and CRY1/2 which are transcriptional repressors form the negative limb of the feedback loop and interact with the CLOCK|NPAS2-BMAL1|BMAL2 heterodimer inhibiting its activity and thereby negatively regulating their own expression. This heterodimer also activates nuclear receptors NR1D1/2 and RORA/B/G, which form a second feedback loop and which activate and repress BMAL1 transcription, respectively. Regulates circadian target genes expression at post-transcriptional levels, but may not be required for the repression at transcriptional level. Controls PER2 protein decay. Represses CRY2 preventing its repression on CLOCK/BMAL1 target genes such as FXYD5 and SCNN1A in kidney and PPARA in liver. Besides its involvement in the maintenance of the circadian clock, has an important function in the regulation of several processes. Participates in the repression of glucocorticoid receptor NR3C1/GR-induced transcriptional activity by reducing the association of NR3C1/GR to glucocorticoid response elements (GREs) by BMAL1:CLOCK. Plays a role in the modulation of the neuroinflammatory state via the regulation of inflammatory mediators release, such as CCL2 and IL6. In spinal astrocytes, negatively regulates the MAPK14/p38 and MAPK8/JNK MAPK cascades as well as the subsequent activation of NFkappaB. Coordinately regulates the expression of multiple genes that are involved in the regulation of renal sodium reabsorption. Can act as gene expression activator in a gene and tissue specific manner, in kidney enhances WNK1 and SLC12A3 expression in collaboration with CLOCK. Modulates hair follicle cycling. Represses the CLOCK-BMAL1 induced transcription of BHLHE40/DEC1. The protein is Period circadian protein homolog 1 (PER1) of Homo sapiens (Human).